The following is a 230-amino-acid chain: Ribonuclease 3 (230 aa).

The 121-residue stretch at 5–125 folds into the RNase III domain; it reads YSRFYNILGY…VIGAIYLDSD (121 aa). Glu40 contributes to the Mg(2+) binding site. Asp44 is a catalytic residue. Asp111 and Glu114 together coordinate Mg(2+). Glu114 is a catalytic residue. One can recognise a DRBM domain in the interval 153–223; that stretch reads DSKSKLQEIL…AEKMIEMLSQ (71 aa).

It belongs to the ribonuclease III family. In terms of assembly, homodimer. Requires Mg(2+) as cofactor.

The protein resides in the cytoplasm. It carries out the reaction Endonucleolytic cleavage to 5'-phosphomonoester.. In terms of biological role, digests double-stranded RNA. Involved in the processing of primary rRNA transcript to yield the immediate precursors to the large and small rRNAs (23S and 16S). Also processes some mRNAs, and tRNAs when they are encoded in the rRNA operon. Functionally, CRISPR (clustered regularly interspaced short palindromic repeat) is an adaptive immune system that provides protection against mobile genetic elements (viruses, transposable elements and conjugative plasmids). CRISPR clusters contain spacers, sequences complementary to antecedent mobile elements, and target invading nucleic acids. CRISPR clusters are transcribed and processed into CRISPR RNA (crRNA). In this organism endogenous ribonuclease 3 and Cas9 are required for correct coprocessing of pre-crRNA and the trans-encoded small RNA (tracrRNA). Cas9, crRNA and tracrRNA are required for cleavage of invading DNA. Complements pre-crRNA and tracrRNA coprocessing defects in an rnc deletion in S.pyogenes strain 370. This is Ribonuclease 3 from Francisella tularensis subsp. novicida (strain U112).